The sequence spans 235 residues: Pyridoxine 5'-phosphate synthase (235 aa).

Residue Asn6 participates in 3-amino-2-oxopropyl phosphate binding. A 1-deoxy-D-xylulose 5-phosphate-binding site is contributed by 8–9; that stretch reads DH. 3-amino-2-oxopropyl phosphate is bound at residue Arg17. His42 serves as the catalytic Proton acceptor. Arg44 and His49 together coordinate 1-deoxy-D-xylulose 5-phosphate. Glu69 acts as the Proton acceptor in catalysis. Residue Thr99 participates in 1-deoxy-D-xylulose 5-phosphate binding. Residue His189 is the Proton donor of the active site. Residues Gly190 and 211-212 contribute to the 3-amino-2-oxopropyl phosphate site; that span reads GH.

It belongs to the PNP synthase family. As to quaternary structure, homooctamer; tetramer of dimers.

The protein localises to the cytoplasm. It catalyses the reaction 3-amino-2-oxopropyl phosphate + 1-deoxy-D-xylulose 5-phosphate = pyridoxine 5'-phosphate + phosphate + 2 H2O + H(+). Its pathway is cofactor biosynthesis; pyridoxine 5'-phosphate biosynthesis; pyridoxine 5'-phosphate from D-erythrose 4-phosphate: step 5/5. In terms of biological role, catalyzes the complicated ring closure reaction between the two acyclic compounds 1-deoxy-D-xylulose-5-phosphate (DXP) and 3-amino-2-oxopropyl phosphate (1-amino-acetone-3-phosphate or AAP) to form pyridoxine 5'-phosphate (PNP) and inorganic phosphate. The chain is Pyridoxine 5'-phosphate synthase from Chlorobium chlorochromatii (strain CaD3).